The primary structure comprises 109 residues: MAPWMHLLTVLALLALWGPNSVQAYSSQHLCGSNLVEALYMTCGRSGFYRPHDRRELEDLQVEQAELGLEAGGLQPSALEMILQKRGIVDQCCNNICTFNQLQNYCNVP.

An N-terminal signal peptide occupies residues 1 to 24; that stretch reads MAPWMHLLTVLALLALWGPNSVQA. Intrachain disulfides connect C31-C93, C43-C106, and C92-C97. A propeptide spans 56–84 (c peptide); that stretch reads ELEDLQVEQAELGLEAGGLQPSALEMILQ.

The protein belongs to the insulin family. Heterodimer of a B chain and an A chain linked by two disulfide bonds.

The protein localises to the secreted. Functionally, insulin decreases blood glucose concentration. It increases cell permeability to monosaccharides, amino acids and fatty acids. It accelerates glycolysis, the pentose phosphate cycle, and glycogen synthesis in liver. The sequence is that of Insulin (INS) from Octodon degus (Degu).